Here is a 424-residue protein sequence, read N- to C-terminus: ATP-dependent RNA helicase WM6 (424 aa).

A compositionally biased stretch (acidic residues) spans 1–16; the sequence is MADNDDLLDYEDEEQT. A disordered region spans residues 1 to 27; that stretch reads MADNDDLLDYEDEEQTETTAVENQEAP. The short motif at 41 to 69 is the Q motif element; that stretch reads SGFRDFLLKPEILRAIVDCGFEHPSEVQH. The Helicase ATP-binding domain maps to 72 to 246; it reads IPQAVLGMDI…KKFMQDPMEV (175 aa). Residue 85 to 92 participates in ATP binding; sequence AKSGMGKT. The DECD box signature appears at 193–196; that stretch reads DECD. The region spanning 258–419 is the Helicase C-terminal domain; sequence GLQQHYVNLK…ELPEEIDLST (162 aa).

This sequence belongs to the DEAD box helicase family. DECD subfamily. Component of the spliceosome. Interacts with the exon junction complex.

The protein resides in the nucleus speckle. It carries out the reaction ATP + H2O = ADP + phosphate + H(+). Functionally, required for mRNA export out of the nucleus. Probable RNA helicase that may regulate entry into mitosis by down-regulating the expression of other genes whose activity may be rate-limiting for entry into mitosis during embryogenesis. Binds to salivary gland chromosomes and modifies position effect variegation. Promotes an open chromatin structure that favors transcription during development by regulating the spread of heterochromatin. The chain is ATP-dependent RNA helicase WM6 (Hel25E) from Drosophila melanogaster (Fruit fly).